The sequence spans 197 residues: Chitin synthase 3 (197 aa).

This sequence belongs to the chitin synthase family. Class III subfamily.

It localises to the cell membrane. The enzyme catalyses [(1-&gt;4)-N-acetyl-beta-D-glucosaminyl](n) + UDP-N-acetyl-alpha-D-glucosamine = [(1-&gt;4)-N-acetyl-beta-D-glucosaminyl](n+1) + UDP + H(+). Functionally, polymerizes chitin, a structural polymer of the cell wall and septum, by transferring the sugar moiety of UDP-GlcNAc to the non-reducing end of the growing chitin polymer. This chain is Chitin synthase 3 (CHS3), found in Exophiala jeanselmei (Dematiaceous fungus).